Reading from the N-terminus, the 462-residue chain is uncharacterized protein (462 aa).

2 consecutive transmembrane segments (helical) span residues 12–32 and 257–277; these read WWWLTFGCARTVTVGFVAPTV and GLCVDLLVCVLLLALLLLELV.

The protein belongs to the HHV-5 US29 protein family.

It localises to the host membrane. This is an uncharacterized protein from Human cytomegalovirus (strain AD169) (HHV-5).